Here is a 451-residue protein sequence, read N- to C-terminus: tRNA-2-methylthio-N(6)-dimethylallyladenosine synthase (451 aa).

The 117-residue stretch at 6-122 (RRYHIITFGC…LDQLLEQVWA (117 aa)) folds into the MTTase N-terminal domain. The [4Fe-4S] cluster site is built by Cys15, Cys51, Cys85, Cys157, Cys161, and Cys164. Residues 143–384 (RESTVSAWVN…STQAMERSQR (242 aa)) form the Radical SAM core domain. The region spanning 383–447 (QRYLGRVEEV…AFSLTGEALS (65 aa)) is the TRAM domain.

Belongs to the methylthiotransferase family. MiaB subfamily. In terms of assembly, monomer. Requires [4Fe-4S] cluster as cofactor.

Its subcellular location is the cytoplasm. The enzyme catalyses N(6)-dimethylallyladenosine(37) in tRNA + (sulfur carrier)-SH + AH2 + 2 S-adenosyl-L-methionine = 2-methylsulfanyl-N(6)-dimethylallyladenosine(37) in tRNA + (sulfur carrier)-H + 5'-deoxyadenosine + L-methionine + A + S-adenosyl-L-homocysteine + 2 H(+). In terms of biological role, catalyzes the methylthiolation of N6-(dimethylallyl)adenosine (i(6)A), leading to the formation of 2-methylthio-N6-(dimethylallyl)adenosine (ms(2)i(6)A) at position 37 in tRNAs that read codons beginning with uridine. This is tRNA-2-methylthio-N(6)-dimethylallyladenosine synthase from Synechocystis sp. (strain ATCC 27184 / PCC 6803 / Kazusa).